Here is a 114-residue protein sequence, read N- to C-terminus: Iron-sulfur cluster insertion protein ErpA (114 aa).

Iron-sulfur cluster contacts are provided by Cys42, Cys106, and Cys108.

The protein belongs to the HesB/IscA family. In terms of assembly, homodimer. The cofactor is iron-sulfur cluster.

In terms of biological role, required for insertion of 4Fe-4S clusters for at least IspG. The sequence is that of Iron-sulfur cluster insertion protein ErpA from Cronobacter sakazakii (strain ATCC BAA-894) (Enterobacter sakazakii).